The chain runs to 130 residues: Small ribosomal subunit protein uS11 (130 aa).

The protein belongs to the universal ribosomal protein uS11 family. Part of the 30S ribosomal subunit. Interacts with proteins S7 and S18. Binds to IF-3.

Its function is as follows. Located on the platform of the 30S subunit, it bridges several disparate RNA helices of the 16S rRNA. Forms part of the Shine-Dalgarno cleft in the 70S ribosome. This chain is Small ribosomal subunit protein uS11, found in Prochlorococcus marinus (strain MIT 9515).